Consider the following 279-residue polypeptide: MAIKTYKPTTNGRRNMSGFDFSVITKTTPEKSLLAKKSKTGARNAEGRMTVRHHGGGHKQQYRIIDFKRIKDDKTATVKAIEYDPNRTANIALLVYEDGVKSYILAPKGLEAGTKVQSGPDADIKVGNALPLGNIPEGTLIHNIELKPGKGGQLARSAGTSAQILGKDDAGKYVIIRLSSGEVRMIPATSRATIGEVGNAEHSLISWGKAGRSRWRGKTPHVRGSVMNPNDHPHGGGEGKAPVGHPSPMSPWGKKSYGKKTRDKKKPSTKFIVRGRKGK.

Basic residues-rich tracts occupy residues 211–221 (GRSRWRGKTPH) and 256–279 (SYGKKTRDKKKPSTKFIVRGRKGK). Positions 211–279 (GRSRWRGKTP…KFIVRGRKGK (69 aa)) are disordered.

Belongs to the universal ribosomal protein uL2 family. As to quaternary structure, part of the 50S ribosomal subunit. Forms a bridge to the 30S subunit in the 70S ribosome.

Its function is as follows. One of the primary rRNA binding proteins. Required for association of the 30S and 50S subunits to form the 70S ribosome, for tRNA binding and peptide bond formation. It has been suggested to have peptidyltransferase activity; this is somewhat controversial. Makes several contacts with the 16S rRNA in the 70S ribosome. The polypeptide is Large ribosomal subunit protein uL2 (Oenococcus oeni (strain ATCC BAA-331 / PSU-1)).